Here is a 738-residue protein sequence, read N- to C-terminus: 1,4-alpha-glucan branching enzyme GlgB (738 aa).

Aspartate 399 functions as the Nucleophile in the catalytic mechanism. Glutamate 452 (proton donor) is an active-site residue.

This sequence belongs to the glycosyl hydrolase 13 family. GlgB subfamily. In terms of assembly, monomer.

It catalyses the reaction Transfers a segment of a (1-&gt;4)-alpha-D-glucan chain to a primary hydroxy group in a similar glucan chain.. Its pathway is glycan biosynthesis; glycogen biosynthesis. Catalyzes the formation of the alpha-1,6-glucosidic linkages in glycogen by scission of a 1,4-alpha-linked oligosaccharide from growing alpha-1,4-glucan chains and the subsequent attachment of the oligosaccharide to the alpha-1,6 position. This is 1,4-alpha-glucan branching enzyme GlgB from Chlamydia trachomatis serovar L2 (strain ATCC VR-902B / DSM 19102 / 434/Bu).